Here is a 959-residue protein sequence, read N- to C-terminus: Glycine dehydrogenase (decarboxylating) (959 aa).

K707 bears the N6-(pyridoxal phosphate)lysine mark.

This sequence belongs to the GcvP family. In terms of assembly, the glycine cleavage system is composed of four proteins: P, T, L and H. It depends on pyridoxal 5'-phosphate as a cofactor.

It catalyses the reaction N(6)-[(R)-lipoyl]-L-lysyl-[glycine-cleavage complex H protein] + glycine + H(+) = N(6)-[(R)-S(8)-aminomethyldihydrolipoyl]-L-lysyl-[glycine-cleavage complex H protein] + CO2. Its function is as follows. The glycine cleavage system catalyzes the degradation of glycine. The P protein binds the alpha-amino group of glycine through its pyridoxal phosphate cofactor; CO(2) is released and the remaining methylamine moiety is then transferred to the lipoamide cofactor of the H protein. This chain is Glycine dehydrogenase (decarboxylating), found in Photobacterium profundum (strain SS9).